The primary structure comprises 166 residues: Putative methyltransferase Rv1506c (166 aa).

The protein belongs to the methyltransferase superfamily.

Probably plays a role in host phagosome maturation arrest, as well as a role in the synthesis of acyltrehalose-containing glycolipids. This Mycobacterium tuberculosis (strain ATCC 25618 / H37Rv) protein is Putative methyltransferase Rv1506c.